The sequence spans 662 residues: Zinc finger protein 17 (662 aa).

Residues 8 to 101 enclose the KRAB domain; the sequence is MVFEDVAIHF…LLKDILHLAE (94 aa). C2H2-type zinc fingers lie at residues 190–212, 218–240, 246–268, 274–296, 302–324, 358–380, 386–408, 414–436, 442–464, 470–492, 498–520, 526–548, 554–576, 582–604, 610–632, and 638–660; these read YSCTQCGKDFCHQHTLFEHQKIH, YECSECGKLFRYNSDLIKHQRNH, YKCSECGKAFSLKYNVVQHQKIH, YECSECGKAFLRKSHLLQHQRIH, YVCSECGKAFLTQAHLVGHQKIH, FYCCECGKFFMDSCTLIIHQRVH, YECNECGKFFRYRSTLIRHQKVH, YECSECGKFFMDTSTLIIHQRVH, YECNKCGKFFRYCFTLNRHQRVH, YECSECGKFFVDSCTLKSHQRVH, FECSICGKSFRCRSTLDTHQRIH, YECSECGKFFRHNSNHIRHRRNH, FECTECGRVFSQNSHLIRHQKVH, YKCSKCGKFFMDSSTLISHERVH, YECSECGKVFRYNSSLIKHRRIH, and YQCSECGRVFNQNSHLIQHQKVH.

This sequence belongs to the krueppel C2H2-type zinc-finger protein family.

The protein localises to the nucleus. May be involved in transcriptional regulation. This is Zinc finger protein 17 (ZNF17) from Homo sapiens (Human).